Consider the following 379-residue polypeptide: Chaperone protein DnaJ (379 aa).

The 66-residue stretch at Asp5–Gly70 folds into the J domain. Residues Gly134–Thr212 form a CR-type zinc finger. 8 residues coordinate Zn(2+): Cys147, Cys150, Cys164, Cys167, Cys186, Cys189, Cys200, and Cys203. 4 CXXCXGXG motif repeats span residues Cys147–Gly154, Cys164–Gly171, Cys186–Gly193, and Cys200–Gly207.

Belongs to the DnaJ family. Homodimer. It depends on Zn(2+) as a cofactor.

The protein resides in the cytoplasm. Participates actively in the response to hyperosmotic and heat shock by preventing the aggregation of stress-denatured proteins and by disaggregating proteins, also in an autonomous, DnaK-independent fashion. Unfolded proteins bind initially to DnaJ; upon interaction with the DnaJ-bound protein, DnaK hydrolyzes its bound ATP, resulting in the formation of a stable complex. GrpE releases ADP from DnaK; ATP binding to DnaK triggers the release of the substrate protein, thus completing the reaction cycle. Several rounds of ATP-dependent interactions between DnaJ, DnaK and GrpE are required for fully efficient folding. Also involved, together with DnaK and GrpE, in the DNA replication of plasmids through activation of initiation proteins. This Cronobacter sakazakii (strain ATCC BAA-894) (Enterobacter sakazakii) protein is Chaperone protein DnaJ.